We begin with the raw amino-acid sequence, 95 residues long: Histone-like DNA-binding protein (95 aa).

The protein belongs to the bacterial histone-like protein family.

The sequence is that of Histone-like DNA-binding protein from Rickettsia rickettsii.